The following is a 348-amino-acid chain: Putative serine/threonine-protein phosphatase C26H8.05c (348 aa).

Positions 53, 55, 81, and 113 each coordinate Mn(2+). Catalysis depends on His114, which acts as the Proton donor. Mn(2+)-binding residues include His163 and His237. The tract at residues 259–282 (TNEEDSELDSDSASPVDDSPAPGD) is disordered. Residues 269 to 280 (DSASPVDDSPAP) show a composition bias toward low complexity. Ser272 is subject to Phosphoserine. Leu348 bears the Leucine methyl ester mark.

The protein belongs to the PPP phosphatase family. PP-1 subfamily. It depends on Mn(2+) as a cofactor.

Its subcellular location is the cytoplasm. It localises to the nucleus. It catalyses the reaction O-phospho-L-seryl-[protein] + H2O = L-seryl-[protein] + phosphate. It carries out the reaction O-phospho-L-threonyl-[protein] + H2O = L-threonyl-[protein] + phosphate. In Schizosaccharomyces pombe (strain 972 / ATCC 24843) (Fission yeast), this protein is Putative serine/threonine-protein phosphatase C26H8.05c.